A 333-amino-acid chain; its full sequence is Na(+)-translocating ferredoxin:NAD(+) oxidoreductase complex subunit B (333 aa).

The tract at residues 1–27 (MLNAILVPVGILGVFGLIFGIGLAIAA) is hydrophobic. Residues 33–92 (YEDPRVPLVRAALPGANCGGCGLPGCDALAANIVGGSAAIDACPVGGASCAAAVAEIMGM) form the 4Fe-4S domain. [4Fe-4S] cluster contacts are provided by C50, C53, C58, C75, C138, C142, C148, C152, C172, C175, C178, C182, C217, C220, C223, C227, C246, C249, C252, C256, C279, C282, C285, C289, C310, C313, C316, and C320. 4Fe-4S ferredoxin-type domains are found at residues 126 to 162 (REAM…IGED), 163 to 192 (GLPK…LVPE), 207 to 237 (KIAR…VENN), 239 to 266 (AKID…GDVE), 270 to 299 (STAY…GEIK), and 301 to 330 (PPYV…MRPN).

The protein belongs to the 4Fe4S bacterial-type ferredoxin family. RnfB subfamily. In terms of assembly, the complex is composed of six subunits: RnfA, RnfB, RnfC, RnfD, RnfE and RnfG. It depends on [4Fe-4S] cluster as a cofactor.

The protein localises to the cell membrane. It catalyses the reaction 2 reduced [2Fe-2S]-[ferredoxin] + Na(+)(in) + NAD(+) + H(+) = 2 oxidized [2Fe-2S]-[ferredoxin] + Na(+)(out) + NADH. Part of a membrane-bound complex that couples electron transfer with translocation of ions across the membrane. Couples electron transfer from reduced ferredoxin to NAD(+) with electrogenic movement of Na(+) out of the cell. Involved in caffeate respiration. The chain is Na(+)-translocating ferredoxin:NAD(+) oxidoreductase complex subunit B from Acetobacterium woodii (strain ATCC 29683 / DSM 1030 / JCM 2381 / KCTC 1655 / WB1).